Here is an 878-residue protein sequence, read N- to C-terminus: Leucine--tRNA ligase (878 aa).

The 'HIGH' region motif lies at 43-53 (PYPSGRIHIGH). Residues 630–634 (KMSKS) carry the 'KMSKS' region motif. Lys633 contributes to the ATP binding site.

It belongs to the class-I aminoacyl-tRNA synthetase family.

The protein localises to the cytoplasm. The catalysed reaction is tRNA(Leu) + L-leucine + ATP = L-leucyl-tRNA(Leu) + AMP + diphosphate. The sequence is that of Leucine--tRNA ligase from Nitrobacter hamburgensis (strain DSM 10229 / NCIMB 13809 / X14).